The primary structure comprises 691 residues: Heat shock factor protein (691 aa).

A disordered region spans residues 1–31 (MSRSRSSAKAVQFKHESEEEEEDEEEQLPSR). Acidic residues predominate over residues 18 to 27 (EEEEEDEEEQ). A DNA-binding region spans residues 46–150 (VPAFLAKLWR…LLDQIKRKIS (105 aa)). At S256 the chain carries Phosphoserine. T258 is subject to Phosphothreonine. Phosphoserine is present on residues S260, S283, S299, and S580. A disordered region spans residues 288 to 307 (TAASHYDQESVSPPAVERPR). Residues 658 to 691 (SDILDTDDGNNDQEASRRQMQTQSSVLNTPRHEL) form a disordered region. Over residues 659–668 (DILDTDDGNN) the composition is skewed to acidic residues. The segment covering 675 to 685 (RQMQTQSSVLN) has biased composition (polar residues).

The protein belongs to the HSF family. In terms of assembly, homotrimer. Post-translationally, exhibits temperature-dependent phosphorylation.

It is found in the nucleus. In terms of biological role, DNA-binding protein that specifically binds heat shock promoter elements (HSE) and activates transcription. In higher eukaryotes, HSF is unable to bind to the HSE unless the cells are heat shocked. In Drosophila melanogaster (Fruit fly), this protein is Heat shock factor protein (Hsf).